Reading from the N-terminus, the 574-residue chain is Glutamyl-tRNA(Gln) amidotransferase subunit B, mitochondrial (574 aa).

Residues 1–12 (MIRQFVSHRGIP) constitute a mitochondrion transit peptide. The interval 34–62 (PLGRKNWSTSDEAKSKRAAMRKGGAPPPE) is disordered.

This sequence belongs to the GatB/GatE family. GatB subfamily. In terms of assembly, subunit of the heterotrimeric GatCAB amidotransferase (AdT) complex, composed of A, B and C subunits.

The protein resides in the mitochondrion. It catalyses the reaction L-glutamyl-tRNA(Gln) + L-glutamine + ATP + H2O = L-glutaminyl-tRNA(Gln) + L-glutamate + ADP + phosphate + H(+). Allows the formation of correctly charged Gln-tRNA(Gln) through the transamidation of misacylated Glu-tRNA(Gln) in the mitochondria. The reaction takes place in the presence of glutamine and ATP through an activated gamma-phospho-Glu-tRNA(Gln). The sequence is that of Glutamyl-tRNA(Gln) amidotransferase subunit B, mitochondrial from Ajellomyces capsulatus (strain H143) (Darling's disease fungus).